Here is a 223-residue protein sequence, read N- to C-terminus: Deoxyribose-phosphate aldolase (223 aa).

The Proton donor/acceptor role is filled by D89. K152 acts as the Schiff-base intermediate with acetaldehyde in catalysis. Residue K181 is the Proton donor/acceptor of the active site.

Belongs to the DeoC/FbaB aldolase family. DeoC type 1 subfamily.

Its subcellular location is the cytoplasm. It carries out the reaction 2-deoxy-D-ribose 5-phosphate = D-glyceraldehyde 3-phosphate + acetaldehyde. It functions in the pathway carbohydrate degradation; 2-deoxy-D-ribose 1-phosphate degradation; D-glyceraldehyde 3-phosphate and acetaldehyde from 2-deoxy-alpha-D-ribose 1-phosphate: step 2/2. Catalyzes a reversible aldol reaction between acetaldehyde and D-glyceraldehyde 3-phosphate to generate 2-deoxy-D-ribose 5-phosphate. This is Deoxyribose-phosphate aldolase from Bacillus cereus (strain Q1).